Consider the following 245-residue polypeptide: NAD(P)H-quinone oxidoreductase subunit K (245 aa).

4 residues coordinate [4Fe-4S] cluster: C58, C59, C123, and C154. The segment at 210 to 245 (SDTRSAPPKELAEAIGMPIPPALLTEKAQKEEQTRG) is disordered. Residues 236-245 (KAQKEEQTRG) are compositionally biased toward basic and acidic residues.

This sequence belongs to the complex I 20 kDa subunit family. In terms of assembly, NDH-1 can be composed of about 15 different subunits; different subcomplexes with different compositions have been identified which probably have different functions. Requires [4Fe-4S] cluster as cofactor.

The protein localises to the cellular thylakoid membrane. The enzyme catalyses a plastoquinone + NADH + (n+1) H(+)(in) = a plastoquinol + NAD(+) + n H(+)(out). It catalyses the reaction a plastoquinone + NADPH + (n+1) H(+)(in) = a plastoquinol + NADP(+) + n H(+)(out). NDH-1 shuttles electrons from an unknown electron donor, via FMN and iron-sulfur (Fe-S) centers, to quinones in the respiratory and/or the photosynthetic chain. The immediate electron acceptor for the enzyme in this species is believed to be plastoquinone. Couples the redox reaction to proton translocation, and thus conserves the redox energy in a proton gradient. Cyanobacterial NDH-1 also plays a role in inorganic carbon-concentration. The chain is NAD(P)H-quinone oxidoreductase subunit K from Nostoc punctiforme (strain ATCC 29133 / PCC 73102).